We begin with the raw amino-acid sequence, 145 residues long: Protein H2A.5 (145 aa).

The tract at residues 118-145 is disordered; it reads SPAAAEKEAKSQKAAAKSPKKKTAATKE. The SPKK motif signature appears at 135–138; the sequence is SPKK. Over residues 135–145 the composition is skewed to basic residues; the sequence is SPKKKTAATKE.

This sequence belongs to the histone H2A family. As to quaternary structure, the nucleosome is a histone octamer containing two molecules each of H2A, H2B, H3 and H4 assembled in one H3-H4 heterotetramer and two H2A-H2B heterodimers. The octamer wraps approximately 147 bp of DNA. As to expression, abundant in meristematic tissues.

It localises to the nucleus. The protein localises to the chromosome. Functionally, core component of nucleosome. Nucleosomes wrap and compact DNA into chromatin, limiting DNA accessibility to the cellular machineries which require DNA as a template. Histones thereby play a central role in transcription regulation, DNA repair, DNA replication and chromosomal stability. DNA accessibility is regulated via a complex set of post-translational modifications of histones, also called histone code, and nucleosome remodeling. The sequence is that of Protein H2A.5 (H2A-2) from Triticum aestivum (Wheat).